A 435-amino-acid polypeptide reads, in one-letter code: Chaperone SurA (435 aa).

The first 29 residues, 1-29 (MINKTLHTKHTLLGLLAMAVLMIPVWSQA), serve as a signal peptide directing secretion. PpiC domains follow at residues 180-281 (QEDF…KMID) and 290-390 (VTQY…RVDD).

The protein localises to the periplasm. The enzyme catalyses [protein]-peptidylproline (omega=180) = [protein]-peptidylproline (omega=0). Its function is as follows. Chaperone involved in the correct folding and assembly of outer membrane proteins. Recognizes specific patterns of aromatic residues and the orientation of their side chains, which are found more frequently in integral outer membrane proteins. May act in both early periplasmic and late outer membrane-associated steps of protein maturation. This Alcanivorax borkumensis (strain ATCC 700651 / DSM 11573 / NCIMB 13689 / SK2) protein is Chaperone SurA.